The primary structure comprises 244 residues: tRNA pseudouridine synthase B (244 aa).

Asp-46 acts as the Nucleophile in catalysis.

It belongs to the pseudouridine synthase TruB family. Type 1 subfamily.

The catalysed reaction is uridine(55) in tRNA = pseudouridine(55) in tRNA. In terms of biological role, responsible for synthesis of pseudouridine from uracil-55 in the psi GC loop of transfer RNAs. The polypeptide is tRNA pseudouridine synthase B (Bordetella bronchiseptica (strain ATCC BAA-588 / NCTC 13252 / RB50) (Alcaligenes bronchisepticus)).